The sequence spans 102 residues: MNKQKIRIKLKAFEHTILDQSAAKIVETAKRTGASVSGPIPLPTERSLYTVLRSPHIDKDSREQFELKVHKRLIDIIDPTPKTIDALMRIDLPAGVDIEIKL.

The protein belongs to the universal ribosomal protein uS10 family. Part of the 30S ribosomal subunit.

In terms of biological role, involved in the binding of tRNA to the ribosomes. The chain is Small ribosomal subunit protein uS10 from Carboxydothermus hydrogenoformans (strain ATCC BAA-161 / DSM 6008 / Z-2901).